Consider the following 92-residue polypeptide: Large ribosomal subunit protein bL28 (92 aa).

The protein belongs to the bacterial ribosomal protein bL28 family.

The polypeptide is Large ribosomal subunit protein bL28 (Borrelia garinii subsp. bavariensis (strain ATCC BAA-2496 / DSM 23469 / PBi) (Borreliella bavariensis)).